Reading from the N-terminus, the 122-residue chain is Small ribosomal subunit protein uS13 (122 aa).

Positions 99–122 are disordered; it reads RGQRTHTNARTRKGPAKAIAGKKK.

This sequence belongs to the universal ribosomal protein uS13 family. As to quaternary structure, part of the 30S ribosomal subunit. Forms a loose heterodimer with protein S19. Forms two bridges to the 50S subunit in the 70S ribosome.

Its function is as follows. Located at the top of the head of the 30S subunit, it contacts several helices of the 16S rRNA. In the 70S ribosome it contacts the 23S rRNA (bridge B1a) and protein L5 of the 50S subunit (bridge B1b), connecting the 2 subunits; these bridges are implicated in subunit movement. Contacts the tRNAs in the A and P-sites. This is Small ribosomal subunit protein uS13 from Cereibacter sphaeroides (strain ATCC 17029 / ATH 2.4.9) (Rhodobacter sphaeroides).